Here is a 302-residue protein sequence, read N- to C-terminus: Deoxyhypusine hydroxylase (302 aa).

An N-acetylmethionine modification is found at Met1. 5 HEAT-like PBS-type repeats span residues 54-80, 87-113, 175-201, 206-232, and 239-265; these read LKHELAYCLGQMRDARAIPVLADVLQD, VRHEAGEALGAIGNPEVLGLLKQYSTD, ERYRAMFALRNVGGKEAALALAEGLQC, FRHEVGYVLGQLQHEAAVPGLAATLAR, and VRHECAEALGAIARPACLAALREHIED. 3 residues coordinate Fe cation: His56, His89, and Glu90. Positions 208, 241, and 242 each coordinate Fe cation.

It belongs to the deoxyhypusine hydroxylase family. It depends on Fe(2+) as a cofactor.

It catalyses the reaction [eIF5A protein]-deoxyhypusine + AH2 + O2 = [eIF5A protein]-hypusine + A + H2O. Its pathway is protein modification; eIF5A hypusination. Catalyzes the hydroxylation of the N(6)-(4-aminobutyl)-L-lysine intermediate produced by deoxyhypusine synthase/DHPS on a critical lysine of the eukaryotic translation initiation factor 5A/eIF-5A. This is the second step of the post-translational modification of that lysine into an unusual amino acid residue named hypusine. Hypusination is unique to mature eIF-5A factor and is essential for its function. In Mus musculus (Mouse), this protein is Deoxyhypusine hydroxylase.